The following is a 377-amino-acid chain: Queuine tRNA-ribosyltransferase (377 aa).

The Proton acceptor role is filled by Asp89. Residues 89-93 (DSGGF), Asp143, Gln188, and Gly215 contribute to the substrate site. Residues 246 to 252 (GVGKPED) form an RNA binding region. The active-site Nucleophile is the Asp265. Positions 270 to 274 (TRNAR) are RNA binding; important for wobble base 34 recognition. Residues Cys303, Cys305, Cys308, and His334 each coordinate Zn(2+).

The protein belongs to the queuine tRNA-ribosyltransferase family. As to quaternary structure, homodimer. Within each dimer, one monomer is responsible for RNA recognition and catalysis, while the other monomer binds to the replacement base PreQ1. The cofactor is Zn(2+).

The enzyme catalyses 7-aminomethyl-7-carbaguanine + guanosine(34) in tRNA = 7-aminomethyl-7-carbaguanosine(34) in tRNA + guanine. Its pathway is tRNA modification; tRNA-queuosine biosynthesis. Catalyzes the base-exchange of a guanine (G) residue with the queuine precursor 7-aminomethyl-7-deazaguanine (PreQ1) at position 34 (anticodon wobble position) in tRNAs with GU(N) anticodons (tRNA-Asp, -Asn, -His and -Tyr). Catalysis occurs through a double-displacement mechanism. The nucleophile active site attacks the C1' of nucleotide 34 to detach the guanine base from the RNA, forming a covalent enzyme-RNA intermediate. The proton acceptor active site deprotonates the incoming PreQ1, allowing a nucleophilic attack on the C1' of the ribose to form the product. After dissociation, two additional enzymatic reactions on the tRNA convert PreQ1 to queuine (Q), resulting in the hypermodified nucleoside queuosine (7-(((4,5-cis-dihydroxy-2-cyclopenten-1-yl)amino)methyl)-7-deazaguanosine). The chain is Queuine tRNA-ribosyltransferase from Acinetobacter baumannii (strain AB307-0294).